Reading from the N-terminus, the 782-residue chain is E3 ubiquitin-protein ligase SopA (782 aa).

The interval 140-170 (SANNRPTVSEGRTPPVSPSLSLQATSSPSSP) is disordered. Positions 157 to 170 (PSLSLQATSSPSSP) are enriched in low complexity. C753 (glycyl thioester intermediate) is an active-site residue.

The protein belongs to the SopA E3 ligase family. Post-translationally, ubiquitinated in the presence of host E1 ubiquitin-activating enzyme, E2 ubiquitin-conjugating enzyme and ubiquitin.

Its subcellular location is the secreted. It localises to the host cell. The catalysed reaction is S-ubiquitinyl-[E2 ubiquitin-conjugating enzyme]-L-cysteine + [acceptor protein]-L-lysine = [E2 ubiquitin-conjugating enzyme]-L-cysteine + N(6)-ubiquitinyl-[acceptor protein]-L-lysine.. In terms of biological role, effector proteins function to alter host cell physiology and promote bacterial survival in host tissues. This protein is an E3 ubiquitin ligase that interferes with host's ubiquitination pathway. This chain is E3 ubiquitin-protein ligase SopA (sopA), found in Salmonella agona (strain SL483).